We begin with the raw amino-acid sequence, 448 residues long: UDP-N-acetylmuramoylalanine--D-glutamate ligase (448 aa).

112 to 118 (GSNAKST) provides a ligand contact to ATP.

Belongs to the MurCDEF family.

The protein resides in the cytoplasm. The catalysed reaction is UDP-N-acetyl-alpha-D-muramoyl-L-alanine + D-glutamate + ATP = UDP-N-acetyl-alpha-D-muramoyl-L-alanyl-D-glutamate + ADP + phosphate + H(+). It participates in cell wall biogenesis; peptidoglycan biosynthesis. Functionally, cell wall formation. Catalyzes the addition of glutamate to the nucleotide precursor UDP-N-acetylmuramoyl-L-alanine (UMA). The sequence is that of UDP-N-acetylmuramoylalanine--D-glutamate ligase from Acinetobacter baumannii (strain ACICU).